A 181-amino-acid polypeptide reads, in one-letter code: MDSHQELSAGSPISYDFLDPDWCFKRYLTKDALHSIETGKGAAYFVPDGFTPILIPNSQSYLLDGNSAQLPRPQPISFTLDQCKVPGYILKSLRKDTKSTERTPRPPNAFILYRKEKHATLLKSNPSINNSQVSKLVGEMWRNESKEVRMRYFKMSEFYKAQHQKMYPGYKYQPRKNKVKR.

The HMG box DNA-binding region spans 103-171; it reads TPRPPNAFIL…QHQKMYPGYK (69 aa).

Its subcellular location is the nucleus. Its function is as follows. Mating type proteins are sequence specific DNA-binding proteins that act as master switches in yeast differentiation by controlling gene expression in a cell type-specific fashion. Positive regulator of MFM genes. The HMG box recognizes the DNA sequence 5'-AACAAAG-3'. Required for conjugation and efficient meiosis. The chain is Mating-type M-specific polypeptide Mc (matMc) from Schizosaccharomyces kambucha (Fission yeast).